Here is a 260-residue protein sequence, read N- to C-terminus: Thrombin-like enzyme 1 (260 aa).

The signal sequence occupies residues 1–18 (MVLITVLANLLILQLSYA). The propeptide occupies 19 to 24 (QKSSEL). In terms of domain architecture, Peptidase S1 spans 25–251 (VIGGDECNIN…HLDWIQSIIA (227 aa)). 6 cysteine pairs are disulfide-bonded: Cys31/Cys165, Cys52/Cys68, Cys102/Cys258, Cys144/Cys212, Cys176/Cys191, and Cys202/Cys227. The active-site Charge relay system is the His67. Asn105 is a glycosylation site (N-linked (GlcNAc...) asparagine). Asp112 functions as the Charge relay system in the catalytic mechanism. 2 N-linked (GlcNAc...) asparagine glycosylation sites follow: Asn156 and Asn172. Ser206 (charge relay system) is an active-site residue. N-linked (GlcNAc...) asparagine glycosylation occurs at Asn253.

This sequence belongs to the peptidase S1 family. Snake venom subfamily. In terms of assembly, monomer. In terms of tissue distribution, expressed by the venom gland.

The protein resides in the secreted. In terms of biological role, thrombin-like snake venom serine protease. This Trimeresurus albolabris (White-lipped pit viper) protein is Thrombin-like enzyme 1.